Reading from the N-terminus, the 402-residue chain is MRTIEYDVVQDMIRNFTEQLQEISNEINSESIKKLAGSIKEKIEKNAFYLVVLGQFKRGKSTLINYMLGANLLPTGVLPLTSVITKIYYSPEVKVDVIFESGVKKEIPVDELDLYCTERGNPKNQKCVDTIEIGYPFDFLNKDVVIVDTPGIGSVYQHNTDVTYEFIDKSDAVVFVLSVDPPITEVEKQFLLKIAENVDKIFFVINKSDLTSKNEIEEIVSFTTNVIKDITKKGNINIFPLSAKMALEGKISKNEEMIEKSCVEIFEKELKQFLKEEKGKIQILSNLKSLDGFLGVCEAFLENDMKLKIMPVKQLEENIEKFNEFLERVNQNKIEIYKLFKIEMNDILQSFDDEMEKIKKELVVKITKKINDYYPSVARLKRIEQKEHLNKYLEKAIVEEFD.

The protein to M.genitalium MG148.

This is an uncharacterized protein from Caldicellulosiruptor sp. (strain Rt8B.4).